A 318-amino-acid chain; its full sequence is N-acetyl-gamma-glutamyl-phosphate reductase (318 aa).

The active site involves cysteine 132.

Belongs to the NAGSA dehydrogenase family. Type 1 subfamily.

The protein localises to the cytoplasm. The catalysed reaction is N-acetyl-L-glutamate 5-semialdehyde + phosphate + NADP(+) = N-acetyl-L-glutamyl 5-phosphate + NADPH + H(+). It functions in the pathway amino-acid biosynthesis; L-arginine biosynthesis; N(2)-acetyl-L-ornithine from L-glutamate: step 3/4. Catalyzes the NADPH-dependent reduction of N-acetyl-5-glutamyl phosphate to yield N-acetyl-L-glutamate 5-semialdehyde. The polypeptide is N-acetyl-gamma-glutamyl-phosphate reductase (Azobacteroides pseudotrichonymphae genomovar. CFP2).